The following is a 199-amino-acid chain: Peroxiredoxin-1 (199 aa).

Serine 2 carries the post-translational modification N-acetylserine. A Thioredoxin domain is found at alanine 6–phenylalanine 165. The residue at position 7 (lysine 7) is an N6-acetyllysine; alternate. Lysine 7 participates in a covalent cross-link: Glycyl lysine isopeptide (Lys-Gly) (interchain with G-Cter in SUMO2); alternate. N6-acetyllysine is present on residues lysine 16 and lysine 27. A Phosphoserine modification is found at serine 32. Position 35 is an N6-acetyllysine; alternate (lysine 35). Residue lysine 35 is modified to N6-succinyllysine; alternate. The Cysteine sulfenic acid (-SOH) intermediate role is filled by cysteine 52. Threonine 90 carries the post-translational modification Phosphothreonine. Lysine 120 is covalently cross-linked (Glycyl lysine isopeptide (Lys-Gly) (interchain with G-Cter in SUMO2)). Position 136 is an N6-acetyllysine (lysine 136). Lysine 185 participates in a covalent cross-link: Glycyl lysine isopeptide (Lys-Gly) (interchain with G-Cter in SUMO1). The residue at position 197 (lysine 197) is an N6-acetyllysine.

It belongs to the peroxiredoxin family. AhpC/Prx1 subfamily. In terms of assembly, homodimer; disulfide-linked, upon oxidation. 5 homodimers assemble to form a ring-like decamer. Interacts with GDPD5; forms a mixed-disulfide with GDPD5. Interacts with SESN1 and SESN2. Interacts with FAM107A. Post-translationally, phosphorylated on Thr-90 during the M-phase, which leads to a decrease in enzymatic activity. In terms of processing, acetylation increases reducing activity and resistance to superoxidation. Deacetylated by HDAC6 which decreases reducing activity. As to expression, found in various tissues; high concentration in liver.

It localises to the cytoplasm. The enzyme catalyses a hydroperoxide + [thioredoxin]-dithiol = an alcohol + [thioredoxin]-disulfide + H2O. Functionally, thiol-specific peroxidase that catalyzes the reduction of hydrogen peroxide and organic hydroperoxides to water and alcohols, respectively. Plays a role in cell protection against oxidative stress by detoxifying peroxides and as sensor of hydrogen peroxide-mediated signaling events. Might participate in the signaling cascades of growth factors and tumor necrosis factor-alpha by regulating the intracellular concentrations of H(2)O(2). Reduces an intramolecular disulfide bond in GDPD5 that gates the ability to GDPD5 to drive postmitotic motor neuron differentiation. The sequence is that of Peroxiredoxin-1 (Prdx1) from Mus musculus (Mouse).